Here is a 617-residue protein sequence, read N- to C-terminus: Elongation factor 4 (617 aa).

A tr-type G domain is found at Glu-17–Val-203. GTP is bound by residues Asp-29–Thr-34 and Asn-150–Asp-153.

The protein belongs to the TRAFAC class translation factor GTPase superfamily. Classic translation factor GTPase family. LepA subfamily.

The protein localises to the cell membrane. The enzyme catalyses GTP + H2O = GDP + phosphate + H(+). In terms of biological role, required for accurate and efficient protein synthesis under certain stress conditions. May act as a fidelity factor of the translation reaction, by catalyzing a one-codon backward translocation of tRNAs on improperly translocated ribosomes. Back-translocation proceeds from a post-translocation (POST) complex to a pre-translocation (PRE) complex, thus giving elongation factor G a second chance to translocate the tRNAs correctly. Binds to ribosomes in a GTP-dependent manner. The sequence is that of Elongation factor 4 from Corynebacterium urealyticum (strain ATCC 43042 / DSM 7109).